We begin with the raw amino-acid sequence, 66 residues long: Alpha-conotoxin GID (66 aa).

The signal sequence occupies residues 1-21 (MGMRMMFTVFLLVVLAATIVS). The propeptide occupies 22–44 (FTSDRASDGRNVAAKAFHRIGRT). Residues 45-48 (IRDE) are N-terminal tail important for activity on alpha-3-beta-2/CHRNA3-CHRNB2 and alpha-4-beta-2/CHRNA4-CHRNB2 nAChR. Position 48 is a 4-carboxyglutamate (Glu-48). Disulfide bonds link Cys-49-Cys-55 and Cys-50-Cys-63. A ser-Xaa-Pro motif, crucial for potent interaction with nAChR region spans residues 51–53 (SNP). Residue Pro-60 is modified to 4-hydroxyproline.

The protein belongs to the conotoxin A superfamily. Gamma-carboxyglutamation of Glu-48 seems to be not important for nAChR inhibition, since synthetic peptides without this modification do not show change in inhibition of alpha-7/CHRNA7 and alpha-3-beta-2/CHRNA3-CHRNB2 nAChR and show a 2.3-fold increase in inhibition of alpha-4-beta-2/CHRNA4-CHRNB2 nAChR. Post-translationally, hydroxylation of Pro-60 seems to be important for nAChR inhibition, since synthetic peptides without this modification show a small decrease in inhibition of alpha-7/CHRNA7 and alpha-3-beta-2/CHRNA3-CHRNB2 nAChR and a very important decrease in inhibition of alpha-4-beta-2/CHRNA4-CHRNB2 nAChR. In terms of processing, an amidation of Cys-63 increases potency against alpha-7/CHRNA7 (2.6-fold) and alpha-3-beta-2/CHRNA3-CHRNB2 (2-fold) nAChR. On the other hand, the peptide has no more activity on alpha-4-beta-2/CHRNA4-CHRNB2 nAChR with an amidated Cys-63. Expressed by the venom duct.

The protein resides in the secreted. Alpha-conotoxins act on postsynaptic membranes, they bind to the nicotinic acetylcholine receptors (nAChR) and thus inhibit them. This toxin reversibly blocks alpha-3-beta-2/CHRNA3-CHRNB2 (IC(50)=3.1-5.1 nM), alpha-7/CHRNA7 (IC(50)=4.5-5.1 nM), and alpha-4-beta-2/CHRNA4-CHRNB2 (IC(50)=128.6-390 nM) nAChRs. This Conus geographus (Geography cone) protein is Alpha-conotoxin GID.